Here is an 893-residue protein sequence, read N- to C-terminus: DNA gyrase subunit A (893 aa).

The region spanning 35–501 is the Topo IIA-type catalytic domain; that stretch reads LPDVRDGLKP…GLEDLEDEDL (467 aa). Tyrosine 123 acts as the O-(5'-phospho-DNA)-tyrosine intermediate in catalysis. The GyrA-box signature appears at 528 to 534; the sequence is QNRGGRG. Residues 810-893 form a disordered region; it reads VNEEDDNEEN…ASDNEEDSDE (84 aa). Acidic residues-rich tracts occupy residues 812 to 821 and 852 to 862; these read EEDDNEENAD and DAEMESVESPE. The segment covering 863–879 has biased composition (basic and acidic residues); sequence NDDRIDIRQDFMDRVNE. Residues 880 to 893 show a composition bias toward acidic residues; that stretch reads DIESASDNEEDSDE.

The protein belongs to the type II topoisomerase GyrA/ParC subunit family. In terms of assembly, heterotetramer, composed of two GyrA and two GyrB chains. In the heterotetramer, GyrA contains the active site tyrosine that forms a transient covalent intermediate with DNA, while GyrB binds cofactors and catalyzes ATP hydrolysis.

It localises to the cytoplasm. The enzyme catalyses ATP-dependent breakage, passage and rejoining of double-stranded DNA.. Its function is as follows. A type II topoisomerase that negatively supercoils closed circular double-stranded (ds) DNA in an ATP-dependent manner to modulate DNA topology and maintain chromosomes in an underwound state. Negative supercoiling favors strand separation, and DNA replication, transcription, recombination and repair, all of which involve strand separation. Also able to catalyze the interconversion of other topological isomers of dsDNA rings, including catenanes and knotted rings. Type II topoisomerases break and join 2 DNA strands simultaneously in an ATP-dependent manner. This Staphylococcus epidermidis (strain ATCC 35984 / DSM 28319 / BCRC 17069 / CCUG 31568 / BM 3577 / RP62A) protein is DNA gyrase subunit A.